A 177-amino-acid chain; its full sequence is Alkyl hydroperoxide reductase AhpD (177 aa).

The Proton donor role is filled by cysteine 130. Cysteine 130 and cysteine 133 are joined by a disulfide. Cysteine 133 acts as the Cysteine sulfenic acid (-SOH) intermediate in catalysis.

Belongs to the AhpD family. As to quaternary structure, homotrimer.

It carries out the reaction N(6)-[(R)-dihydrolipoyl]-L-lysyl-[lipoyl-carrier protein] + a hydroperoxide = N(6)-[(R)-lipoyl]-L-lysyl-[lipoyl-carrier protein] + an alcohol + H2O. Antioxidant protein with alkyl hydroperoxidase activity. Required for the reduction of the AhpC active site cysteine residues and for the regeneration of the AhpC enzyme activity. This chain is Alkyl hydroperoxide reductase AhpD, found in Mycobacterium bovis (strain ATCC BAA-935 / AF2122/97).